The primary structure comprises 160 residues: Putative UPF0479 protein YBL113W-A (160 aa).

Transmembrane regions (helical) follow at residues 39–59 (IVFC…KVLQ) and 136–156 (VPMI…ISQH).

It belongs to the UPF0479 family.

The protein resides in the membrane. The protein is Putative UPF0479 protein YBL113W-A of Saccharomyces cerevisiae (strain ATCC 204508 / S288c) (Baker's yeast).